We begin with the raw amino-acid sequence, 182 residues long: UPF0149 protein CGSHiEE_07975 (182 aa).

The protein belongs to the UPF0149 family.

This chain is UPF0149 protein CGSHiEE_07975, found in Haemophilus influenzae (strain PittEE).